The chain runs to 650 residues: MICOS complex subunit MIC60, mitochondrial (650 aa).

The transit peptide at 1–34 directs the protein to the mitochondrion; it reads MLRKSVLELSSRLSIKRFPRNLGAQRFHLSSSRN. Residues 26 to 74 form a disordered region; sequence RFHLSSSRNASTSGKNGLPGAKPVGKPDASKVDPPKVTPPPPTKGNSSK. Over residues 28–40 the composition is skewed to polar residues; it reads HLSSSRNASTSGK. Residues 35 to 74 lie on the Mitochondrial matrix side of the membrane; it reads ASTSGKNGLPGAKPVGKPDASKVDPPKVTPPPPTKGNSSK. The chain crosses the membrane as a helical span at residues 75–95; that stretch reads VVIGGVAIAGAFLVAYQTGYL. The Mitochondrial intermembrane segment spans residues 96-549; that stretch reads DQYLGKEQQK…FDTLKGTLRH (454 aa). Disordered stretches follow at residues 121–168, 239–267, and 284–304; these read EAHH…ESDL, QSSS…EDGI, and EGSD…TKET. Residues 284–299 are compositionally biased toward low complexity; that stretch reads EGSDTESTGSSSIGEQ. Coiled coils occupy residues 345–369 and 396–430; these read AQVF…LRAR and KAIQ…LAKA. The helical transmembrane segment at 550–570 threads the bilayer; that stretch reads FSLIPPGGGGILAHSLAHVAS. Residues 571–650 are Mitochondrial matrix-facing; sequence SLKFKEVDQA…QSYATCVSLT (80 aa).

Belongs to the MICOS complex subunit Mic60 family. In terms of assembly, component of the mitochondrial contact site and cristae organizing system (MICOS) complex. The MICOS complex associates with mitochondrial outer membrane proteins. Present in a large lipid-enriched complex called mitochondrial transmembrane lipoprotein (MTL) complex made of proteins located in the two mitochondrial membranes, including the TOM complex and the core components of the MICOS complex and containing at least digalactosyldiacylglycerol (DGDG). Binds to TOM40-1. Component of a mitochondrial large protein complex that contains, at least, MIC60, DGS1, TOM40, TOM20 proteins, and petC/RISP.

The protein localises to the mitochondrion inner membrane. In terms of biological role, component of the MICOS complex, a large protein complex of the mitochondrial inner membrane that plays crucial roles in the maintenance of crista junctions, inner membrane architecture, and formation of contact sites to the outer membrane. Plays a role in keeping cristae membranes connected to the inner boundary membrane. Also promotes protein import via the mitochondrial intermembrane space assembly (MIA) pathway. Involved in the maintenance of mitochondria morphology. Binds to glycerolipids such as cardiolipin (CL). Contributes to the export of phosphatidylethanolamine (PE) from mitochondria and to the import of galactoglycerolipids from plastids during phosphate (Pi) starvation. Promotes lipid desorption from membranes, likely as an initial step for lipid transfer, and regulates probably the tethering between the inner and outer membranes of mitochondria by binding to TOM40 proteins. In Arabidopsis thaliana (Mouse-ear cress), this protein is MICOS complex subunit MIC60, mitochondrial.